A 350-amino-acid chain; its full sequence is Beta-ketodecanoyl-[acyl-carrier-protein] synthase (350 aa).

The active site involves Cys-133.

The protein belongs to the thiolase-like superfamily. Beta-ketoacyl-ACP synthases family.

The catalysed reaction is octanoyl-CoA + malonyl-[ACP] + H(+) = 3-oxodecanoyl-[ACP] + CO2 + CoA. Its pathway is lipid metabolism; fatty acid biosynthesis. In terms of biological role, catalyzes the condensation of octanoyl-CoA, obtained from exogenously supplied fatty acids via beta-oxidation, with malonyl-[acyl-carrier protein], forming 3-oxodecanoyl-[acyl-carrier protein], an intermediate of the fatty acid elongation cycle that can then be extended to supply all of the cellular fatty acid needs. The enzyme thereby shunts fatty acid degradation intermediates from the beta-oxidation pathway into de novo fatty acid biosynthesis. The polypeptide is Beta-ketodecanoyl-[acyl-carrier-protein] synthase (Pseudomonas aeruginosa (strain ATCC 15692 / DSM 22644 / CIP 104116 / JCM 14847 / LMG 12228 / 1C / PRS 101 / PAO1)).